The following is a 235-amino-acid chain: Small ribosomal subunit protein uS3 (235 aa).

The KH type-2 domain occupies 39-107 (IREILHKELK…DVVINIVEIR (69 aa)). Residues 215–235 (QDKRMAEGDGGGSSRPRRDAA) are disordered.

The protein belongs to the universal ribosomal protein uS3 family. As to quaternary structure, part of the 30S ribosomal subunit. Forms a tight complex with proteins S10 and S14.

Its function is as follows. Binds the lower part of the 30S subunit head. Binds mRNA in the 70S ribosome, positioning it for translation. The protein is Small ribosomal subunit protein uS3 of Rhodopseudomonas palustris (strain ATCC BAA-98 / CGA009).